The sequence spans 288 residues: Elongation factor Ts (288 aa).

Residues 82 to 85 (TDFV) form an involved in Mg(2+) ion dislocation from EF-Tu region.

The protein belongs to the EF-Ts family.

The protein localises to the cytoplasm. Its function is as follows. Associates with the EF-Tu.GDP complex and induces the exchange of GDP to GTP. It remains bound to the aminoacyl-tRNA.EF-Tu.GTP complex up to the GTP hydrolysis stage on the ribosome. This Chlorobaculum tepidum (strain ATCC 49652 / DSM 12025 / NBRC 103806 / TLS) (Chlorobium tepidum) protein is Elongation factor Ts.